Reading from the N-terminus, the 318-residue chain is tRNA pseudouridine synthase B (318 aa).

The Nucleophile role is filled by aspartate 47.

Belongs to the pseudouridine synthase TruB family. Type 1 subfamily.

The enzyme catalyses uridine(55) in tRNA = pseudouridine(55) in tRNA. Its function is as follows. Responsible for synthesis of pseudouridine from uracil-55 in the psi GC loop of transfer RNAs. This chain is tRNA pseudouridine synthase B, found in Aliivibrio salmonicida (strain LFI1238) (Vibrio salmonicida (strain LFI1238)).